The sequence spans 208 residues: MAFDEEWIPKTRLGKLVMEGQVASMEEAIKSGLPIREPQIIDMLLPDLEDEVLDINMVQRMTDSGRRVKFRATVIVGNRNGYVGLGQAKDVQVGPAIRKAIDAAKLDITYIHRGCGSWECACGLPHTVPYEVTGKAGSVSVTLIPAPRGLGIAAGNTATKVLEKAGIKDVWTKTFGTTRSTLNFAKATFDALNQVNVMRLPVYCKEEA.

One can recognise an S5 DRBM domain in the interval 48–111; the sequence is LEDEVLDINM…DAAKLDITYI (64 aa).

This sequence belongs to the universal ribosomal protein uS5 family. Part of the 30S ribosomal subunit. Contacts protein S4.

Functionally, with S4 and S12 plays an important role in translational accuracy. This chain is Small ribosomal subunit protein uS5, found in Methanosarcina barkeri (strain Fusaro / DSM 804).